The following is a 114-amino-acid chain: UPF0145 protein SSO1976 (114 aa).

Belongs to the UPF0145 family.

The polypeptide is UPF0145 protein SSO1976 (Saccharolobus solfataricus (strain ATCC 35092 / DSM 1617 / JCM 11322 / P2) (Sulfolobus solfataricus)).